The chain runs to 348 residues: MIETDRIISANTVQTKDENSIDRAIRPKTLAEYEGQPAVREQMEIFIQAAKSRKDALDHTLIFGPPGLGKTTLSNIIANEMEVELKQTSGPVLEKAGDLAALLTNLEENDVLFIDEIHRLSPVIEEILYPAMEDYQLDIMIGEGPAARSIKIDLPPFTLVGATTRAGLLTSPLRDRFGIIQRLEFYSVDDLAKIVYRSAKLLDLDITDDGANEIAKRSRGTPRIANRLLRRVRDYAQVKASGVISYDIADKALTMLKVDPVGFDHMDHKYLLTLMEKFGGGPVGLDTMAAALSEEKGTIEDVIEPYLIQQGYLMRTARGRIATLLAYNHFKLKIPDSLSSDQQQNLSL.

The segment at 4 to 186 (TDRIISANTV…FGIIQRLEFY (183 aa)) is large ATPase domain (RuvB-L). Residues Ile25, Arg26, Gly67, Lys70, Thr71, Thr72, 133–135 (EDY), Arg176, Tyr186, and Arg223 contribute to the ATP site. Thr71 serves as a coordination point for Mg(2+). A small ATPAse domain (RuvB-S) region spans residues 187–257 (SVDDLAKIVY…IADKALTMLK (71 aa)). Residues 260 to 348 (PVGFDHMDHK…SSDQQQNLSL (89 aa)) are head domain (RuvB-H). The DNA site is built by Arg315 and Arg320.

It belongs to the RuvB family. Homohexamer. Forms an RuvA(8)-RuvB(12)-Holliday junction (HJ) complex. HJ DNA is sandwiched between 2 RuvA tetramers; dsDNA enters through RuvA and exits via RuvB. An RuvB hexamer assembles on each DNA strand where it exits the tetramer. Each RuvB hexamer is contacted by two RuvA subunits (via domain III) on 2 adjacent RuvB subunits; this complex drives branch migration. In the full resolvosome a probable DNA-RuvA(4)-RuvB(12)-RuvC(2) complex forms which resolves the HJ.

Its subcellular location is the cytoplasm. It carries out the reaction ATP + H2O = ADP + phosphate + H(+). The RuvA-RuvB-RuvC complex processes Holliday junction (HJ) DNA during genetic recombination and DNA repair, while the RuvA-RuvB complex plays an important role in the rescue of blocked DNA replication forks via replication fork reversal (RFR). RuvA specifically binds to HJ cruciform DNA, conferring on it an open structure. The RuvB hexamer acts as an ATP-dependent pump, pulling dsDNA into and through the RuvAB complex. RuvB forms 2 homohexamers on either side of HJ DNA bound by 1 or 2 RuvA tetramers; 4 subunits per hexamer contact DNA at a time. Coordinated motions by a converter formed by DNA-disengaged RuvB subunits stimulates ATP hydrolysis and nucleotide exchange. Immobilization of the converter enables RuvB to convert the ATP-contained energy into a lever motion, pulling 2 nucleotides of DNA out of the RuvA tetramer per ATP hydrolyzed, thus driving DNA branch migration. The RuvB motors rotate together with the DNA substrate, which together with the progressing nucleotide cycle form the mechanistic basis for DNA recombination by continuous HJ branch migration. Branch migration allows RuvC to scan DNA until it finds its consensus sequence, where it cleaves and resolves cruciform DNA. This Francisella philomiragia subsp. philomiragia (strain ATCC 25017 / CCUG 19701 / FSC 153 / O#319-036) protein is Holliday junction branch migration complex subunit RuvB.